Reading from the N-terminus, the 377-residue chain is UPF0754 membrane protein YheB (377 aa).

The next 2 helical transmembrane spans lie at 1 to 21 (MGIA…GAVT) and 357 to 377 (YLGG…VILF).

It belongs to the UPF0754 family.

It is found in the cell membrane. The sequence is that of UPF0754 membrane protein YheB (yheB) from Bacillus subtilis (strain 168).